The sequence spans 141 residues: Ly6/PLAUR domain-containing protein 1 (141 aa).

An N-terminal signal peptide occupies residues 1–20; the sequence is MWVLGIAATFCGLFWLPGLA. Cystine bridges form between cysteine 25/cysteine 54, cysteine 28/cysteine 37, cysteine 46/cysteine 71, cysteine 77/cysteine 100, cysteine 88/cysteine 97, and cysteine 101/cysteine 106. Residues 25–107 enclose the UPAR/Ly6 domain; that stretch reads CYQCEEFQLN…ISCCNTPLCN (83 aa). A glycan (N-linked (GlcNAc...) asparagine) is linked at asparagine 45. Glycine 115 carries GPI-anchor amidated glycine lipidation. A propeptide spans 116 to 141 (removed in mature form); sequence SSASAIRPGLLTTLLFFHLALCLAHC.

In terms of assembly, interacts with CHRNA4 and nAChRs containing alpha-4:beta-2 (CHRNA4:CHRNB2) and alpha-7 (CHRNA7) subunits. In terms of tissue distribution, preferentially expressed in the nervous system. Expressed in embryonic and postnatal postmitotic central and peripheral neurons including subpopulations of motor neurons, sensory neurons, interneurons and neurons of the autonomous nervous system. Expressed around the growing nerves in the limb bud. Expressed at high levels in specific brain regions such as the prefrontal cortex, amygdala, hippocampus, mediodorsal thalamus, dentate gyrus and specific brainstem nuclei (at protein level).

It localises to the cell membrane. In terms of biological role, believed to act as a modulator of nicotinic acetylcholine receptors (nAChRs) activity. In vitro increases receptor desensitization and decreases affinity for ACh of alpha-4:beta-2-containing nAChRs. May play a role in the intracellular trafficking of alpha-4:beta-2 and alpha-7-containing nAChRs and may inhibit their expression at the cell surface. May be involved in the control of anxiety. This is Ly6/PLAUR domain-containing protein 1 (Lypd1) from Mus musculus (Mouse).